A 397-amino-acid chain; its full sequence is Mitochondrial inner membrane magnesium transporter LPE10 (397 aa).

Residues 1 to 37 (MLLVNRAITLNLVKRCCWRSTMFMTPKRFLGTSEEES) constitute a mitochondrion transit peptide. Residues 316–336 (LMLLGIRFSIGMLSLGGPIFI) form a helical membrane-spanning segment. The YGMN motif lies at 340 to 343 (YGMN). The helical transmembrane segment at 354 to 374 (GFIAASAIGMISLGALYFYSI) threads the bilayer.

This sequence belongs to the CorA metal ion transporter (MIT) (TC 1.A.35) family. Forms homooligomers. Interacts with MRS2.

It localises to the mitochondrion inner membrane. In terms of biological role, mitochondrial inner membrane magnesium transporter required for mitochondrial magnesium homeostasis. Modulates the conductance of the MRS2 channel. Involved in the splicing of mRNA group II introns in mitochondria by affecting mitochondrial magnesium concentrations, which are critical for group II intron splicing. This is Mitochondrial inner membrane magnesium transporter LPE10 (LPE10) from Candida glabrata (strain ATCC 2001 / BCRC 20586 / JCM 3761 / NBRC 0622 / NRRL Y-65 / CBS 138) (Yeast).